The following is a 431-amino-acid chain: Peptidase B (431 aa).

The Mn(2+) site is built by K196 and D201. Residue K208 is part of the active site. The Mn(2+) site is built by D219, D278, and E280. R282 is a catalytic residue.

Belongs to the peptidase M17 family. Homohexamer. The cofactor is Mn(2+).

It is found in the cytoplasm. It catalyses the reaction Release of an N-terminal amino acid, Xaa, from a peptide or arylamide. Xaa is preferably Glu or Asp but may be other amino acids, including Leu, Met, His, Cys and Gln.. Its function is as follows. Probably plays an important role in intracellular peptide degradation. This chain is Peptidase B, found in Serratia proteamaculans (strain 568).